The chain runs to 480 residues: UDP-glucose 6-dehydrogenase 5 (480 aa).

NAD(+)-binding positions include 8–13 (GAGYVG), Asp-33, Arg-38, 86–90 (VNTPT), 127–128 (ST), and Glu-161. Substrate is bound by residues 157 to 161 (EFLAE), 216 to 223 (KLAANAFL), and 256 to 269 (RIGP…VGFG). Cys-272 (nucleophile) is an active-site residue. Position 272–275 (272–275 (CFQK)) interacts with NAD(+). Residue 334-335 (FK) coordinates substrate. Arg-342 is an NAD(+) binding site. Ser-393 bears the Phosphoserine mark. Arg-447 contributes to the substrate binding site.

The protein belongs to the UDP-glucose/GDP-mannose dehydrogenase family.

The enzyme catalyses UDP-alpha-D-glucose + 2 NAD(+) + H2O = UDP-alpha-D-glucuronate + 2 NADH + 3 H(+). Its pathway is nucleotide-sugar biosynthesis; UDP-alpha-D-glucuronate biosynthesis; UDP-alpha-D-glucuronate from UDP-alpha-D-glucose: step 1/1. In terms of biological role, involved in the biosynthesis of UDP-glucuronic acid (UDP-GlcA), providing nucleotide sugars for cell-wall polymers. The chain is UDP-glucose 6-dehydrogenase 5 (UGD5) from Oryza sativa subsp. japonica (Rice).